A 185-amino-acid chain; its full sequence is Capsid protein (185 aa).

Residues 136–185 (NAPILSTLPETTVVRRRDRGRSPRRRTPSPRRRRSQSPRRRRSQSRESQC) are disordered. A compositionally biased stretch (basic residues) spans 149–178 (VRRRDRGRSPRRRTPSPRRRRSQSPRRRRS). Residues serine 157, serine 164, and serine 172 each carry the phosphoserine; by host modification. The 1; half-length repeat unit spans residues 157–163 (SPRRRTP). A 3 X 8 AA repeats of S-P-R-R-R-[PR]-S-Q region spans residues 157–179 (SPRRRTPSPRRRRSQSPRRRRSQ). Residues 160–177 (RRTPSPRRRRSQSPRRRR) carry the Bipartite nuclear localization signal motif. A run of 2 repeats spans residues 164–171 (SPRRRRSQ) and 172–179 (SPRRRRSQ). The segment at 179 to 185 (QSRESQC) is RNA binding.

It belongs to the orthohepadnavirus core antigen family. Homodimerizes, then multimerizes. Interacts with cytosol exposed regions of viral L glycoprotein present in the reticulum-to-Golgi compartment. Interacts with human FLNB. Phosphorylated form interacts with host importin alpha; this interaction depends on the exposure of the NLS, which itself depends upon genome maturation and/or phosphorylation of the capsid protein. Interacts with host NUP153. Post-translationally, phosphorylated by host SRPK1, SRPK2, and maybe protein kinase C or GAPDH. Phosphorylation is critical for pregenomic RNA packaging. Protein kinase C phosphorylation is stimulated by HBx protein and may play a role in transport of the viral genome to the nucleus at the late step during the viral replication cycle.

Its subcellular location is the virion. The protein localises to the host cytoplasm. Self assembles to form an icosahedral capsid. Most capsids appear to be large particles with an icosahedral symmetry of T=4 and consist of 240 copies of capsid protein, though a fraction forms smaller T=3 particles consisting of 180 capsid proteins. Entering capsids are transported along microtubules to the nucleus. Phosphorylation of the capsid is thought to induce exposure of nuclear localization signal in the C-terminal portion of the capsid protein that allows binding to the nuclear pore complex via the importin (karyopherin-) alpha and beta. Capsids are imported in intact form through the nuclear pore into the nuclear basket, where it probably binds NUP153. Only capsids that contain the mature viral genome can release the viral DNA and capsid protein into the nucleoplasm. Immature capsids get stuck in the basket. Capsids encapsulate the pre-genomic RNA and the P protein. Pre-genomic RNA is reverse-transcribed into DNA while the capsid is still in the cytoplasm. The capsid can then either be directed to the nucleus, providing more genomes for transcription, or bud through the endoplasmic reticulum to provide new virions. This is Capsid protein from Homo sapiens (Human).